A 1521-amino-acid polypeptide reads, in one-letter code: MNWNTKQENVPKPPPYSKTQSSILQHFLMTSTTSQSSFNYSPHNQEASQTSFNYSLHNQEACMYSGNSNSVSQPLLSGRNYITPQTQISVSNMPTRTIVASQSSMERVVSTNGKGPQQPNHNLQTVSSGIMQNVWLPSHTEATISHNPDGGTNMPYMHPPQNQLVTSDTYSMQLQMAPLHSGKVPMTHQGSQGLNHFIPDQLVDWTQYTSNELSYPEYRPPPKQYSYILPATTSLQVKNNQLPTYTQSLQSKHSVPLSSHQYAAEASKRLSALPYSCRYENQHVQNAQPVSKHLPMEVPQSSEVHSSEKKKDTYRGFKQQWQNPNEKVSIGQFSEVKINIKQPYSESVRPSGDGVQALVQNNQEKRKYTYNPNTNQVIDTNATKEKLVRDIKSLVEIKKKFSELARKIKINKSLLMAAGCSKTANTSYTEPIQHSEFSAKEMSAKNGNDCSMELLATCLSLWKNQPSKTTEENVPKPLEEKQCNTSRISTTVVGSANPTNEVHVKSLCSGVGNSQKMMSSSQTVLPVLIPSCESSGVAVGKGTELQIAVVSPLVLSDTNTLPGKDSVPEVLPETLYPVVKEGSVCSLQTQPTETVALPFDVIGAVASNNISAEIPLPVDKEKQHKPIQGDPDIADSSLGKHSPLGTEVLPKPMDSTIVSGPMLQIESICSLAEGDVSYNSQIAEIFNSVQTEPQKPSPNQVIDSQQEQVYDTTENKDFSLQKDKCVQCTDVPHEVPEQPEPLQPEEPASSEYVEANREATEESCREYTGRKESTAKDVCLPAAIQQDPHPRETDMFSKSDHSLPAINEINDESEPISYLHDQLSELLKEFPYGIETFNRHEVSLDQQKTHKIVENQTGGKTSNVSGDSTDQIKITVLNSEQIKELFPEDDQPCDKLAEPENKEIVAEVKSPCDSQIPREESHDLGMLDPEKDKIHCCALGWLSMVYEGVPQCHCSSTEKKEKDQCLDINSSKQGEQPCNSGITIFEINPVSNNSKTPLTQATEEGHFSAVHGEKTKASKTKDNREGQELACHFSAKCYKKDKKGNFKIRHDTSLKMEQKLKNISSKCDIPNPSKCNKIAAPEILHVTTSNSAKNMPFSKQASQESLQKKHTSQDLGPVKAPIELSSNTDPCRSNTSSVQSVSPEKKKLKFKAGGSRLKYFEKRKTDHVIIPDVEIKKKKYEKQEQNKNAGDTLKLCSILTESNERASVQEKTVPSPESSDPKGSSSKSTRVITVQEYLQRQKDKQITGNNASRNICVETVLCDSGHTKTSKHSAAVSWGKLVEGQSISAETAKELEHNSSSHGKDFKIHHSEASRTHSVSNNNKGKFDGKQPDKMFKNKTSMNNESNQMPLQVKEQRKQYLNRVAFKCTERESICLTKLDSASKKLSIEKKSGEYTSKTKDTDKPSMLEFKLCPDVLLKNTSTVDKQDCPGPGPEKEQAPVQVSGIKSTKEDWLKCIPTRTKMPESSQRDSADSRLSKRSLSADEFEILQNPVKESNIMFRTYKKMYLEKRSRSLGSSPVK.

K223 participates in a covalent cross-link: Glycyl lysine isopeptide (Lys-Gly) (interchain with G-Cter in SUMO2). Residues 621–640 are disordered; it reads EKQHKPIQGDPDIADSSLGK. S910 is modified (phosphoserine). T996 carries the phosphothreonine modification. Polar residues-rich tracts occupy residues 1093-1105 and 1124-1142; these read KNMP…SQES and LSSN…QSVS. Disordered stretches follow at residues 1093–1147, 1204–1230, and 1312–1335; these read KNMP…EKKK, ERAS…KSTR, and EASR…PDKM. A Phosphoserine modification is found at S1142. A compositionally biased stretch (low complexity) spans 1214–1228; the sequence is PSPESSDPKGSSSKS. Basic and acidic residues predominate over residues 1325-1335; sequence GKFDGKQPDKM. A Glycyl lysine isopeptide (Lys-Gly) (interchain with G-Cter in SUMO2) cross-link involves residue K1411. Disordered stretches follow at residues 1425–1444 and 1457–1485; these read DKQD…VQVS and IPTR…SADE. Basic and acidic residues predominate over residues 1467–1476; it reads SQRDSADSRL. Residues S1482 and S1514 each carry the phosphoserine modification.

In terms of assembly, interacts with SETDB1.

It localises to the nucleus. Functionally, plays a role in the regulation of imprinted gene expression, regulates repressive epigenetic modifications associated with SETDB1. Required for the recruitment or accumulation of SETDB1 to the endogenous retroviruses (ERVs) and maintenance of repressive chromatin configuration, contributing to a subset of the SETDB1-dependent ERV silencing in embryonic stem cells. In Mus musculus (Mouse), this protein is Retroelement silencing factor 1.